The sequence spans 315 residues: 3-oxoacyl-[acyl-carrier-protein] reductase 3, chloroplastic (315 aa).

The transit peptide at 1–55 directs the protein to the chloroplast; sequence MATTVAATKLTSLKAVKKLGFREIRQVRQWTPLQSSMPHFGSRQSFATSTVVKAQ. Position 77–101 (77–101) interacts with NADP(+); that stretch reads VTGASRGIGKAIALSLGKAGCKVLV. Ser-209 lines the substrate pocket. Tyr-222 acts as the Proton acceptor in catalysis.

This sequence belongs to the short-chain dehydrogenases/reductases (SDR) family. Homotetramer.

Its subcellular location is the plastid. The protein resides in the chloroplast. It carries out the reaction a (3R)-hydroxyacyl-[ACP] + NADP(+) = a 3-oxoacyl-[ACP] + NADPH + H(+). It functions in the pathway lipid metabolism; fatty acid biosynthesis. The sequence is that of 3-oxoacyl-[acyl-carrier-protein] reductase 3, chloroplastic (bkr3) from Brassica napus (Rape).